The sequence spans 262 residues: NAD-dependent glucose-6-phosphate dehydrogenase (262 aa).

The NAD(+) site is built by asparagine 90, serine 115, tyrosine 152, and lysine 156. Tyrosine 152 acts as the Proton acceptor in catalysis.

Belongs to the NAD(P)-dependent epimerase/dehydratase family. In terms of assembly, homodimer.

It carries out the reaction D-glucose 6-phosphate + NAD(+) = 6-phospho-D-glucono-1,5-lactone + NADH + H(+). It participates in carbohydrate degradation; pentose phosphate pathway. Its function is as follows. Catalyzes the NAD-dependent oxidation of glucose 6-phosphate to 6-phosphogluconolactone. This is NAD-dependent glucose-6-phosphate dehydrogenase from Haloferax volcanii (strain ATCC 29605 / DSM 3757 / JCM 8879 / NBRC 14742 / NCIMB 2012 / VKM B-1768 / DS2) (Halobacterium volcanii).